A 263-amino-acid polypeptide reads, in one-letter code: MITFLPLLLGLSLGCTGAGGFVAHVESTCLLDDAGTPKDFTYCISFNKDLLTCWDPEENKMAPCEFGVLNSLANVLSQHLNQKDTLMQRLRNGLQNCATHTQPFWGSLTNRTRPPSVQVAKTTPFNTREPVMLACYVWGFYPAEVTITWRKNGKLVMPHSSAHKTAQPNGDWTYQTLSHLALTPSYGDTYTCVVEHTGAPEPILRDWTPGLSPMQTLKVSVSAVTLGLGLIIFSLGVISWRRAGHSSYTPLPGSNYSEGWHIS.

Positions 1 to 18 (MITFLPLLLGLSLGCTGA) are cleaved as a signal peptide. Residues 19–112 (GGFVAHVEST…PFWGSLTNRT (94 aa)) form a beta-1 region. The Lumenal segment spans residues 19-218 (GGFVAHVEST…PGLSPMQTLK (200 aa)). 2 disulfide bridges follow: C29–C97 and C43–C53. An N-linked (GlcNAc...) asparagine glycan is attached at N110. The segment at 113-207 (RPPSVQVAKT…GAPEPILRDW (95 aa)) is beta-2. The region spanning 114–208 (PPSVQVAKTT…APEPILRDWT (95 aa)) is the Ig-like C1-type domain. C135 and C192 are joined by a disulfide. The connecting peptide stretch occupies residues 208–218 (TPGLSPMQTLK). The chain crosses the membrane as a helical span at residues 219-239 (VSVSAVTLGLGLIIFSLGVIS). Residues 240–263 (WRRAGHSSYTPLPGSNYSEGWHIS) are Cytoplasmic-facing. Positions 248 to 251 (YTPL) match the YXXZ motif motif.

This sequence belongs to the MHC class II family. Heterodimer of an alpha chain (DMA) and a beta chain (DMB). Interacts with MHCII; this interaction mediates rapid selection of high-affinity peptides in a pH-dependent manner, with an optimum at pH 5.5.

The protein localises to the late endosome membrane. Its subcellular location is the lysosome membrane. Its function is as follows. Plays a critical role in catalyzing the release of class II-associated invariant chain peptide (CLIP) from newly synthesized MHC class II molecules and freeing the peptide binding site for acquisition of antigenic peptides. In B-cells, the interaction between HLA-DM and MHC class II molecules is regulated by HLA-DO. The sequence is that of HLA class II histocompatibility antigen, DM beta chain (HLA-DMB) from Homo sapiens (Human).